A 140-amino-acid chain; its full sequence is PDZ domain-containing protein 11 (140 aa).

The 83-residue stretch at 47-129 (TITLKKPPGA…ISMRVRFFPY (83 aa)) folds into the PDZ domain.

In terms of assembly, interacts with ATP2B1, ATP2B2, ATP2B3, ATP2B4 and ATP7A. Interacts with PLEKHA7 (via WW domains) at zonula adherens; this interaction is essential for the interaction between PLEKHA7 and the ADAM10-binding protein TSPAN33. Interacts with SLC5A6. As to expression, widely expressed (at protein level).

It is found in the secreted. The protein resides in the cytoplasm. Its subcellular location is the cell junction. It localises to the adherens junction. The protein localises to the cell membrane. Mediates docking of ADAM10 to zonula adherens by interacting with PLEKHA7 which is required for PLEKHA7 to interact with the ADAM10-binding protein TSPAN33. This Homo sapiens (Human) protein is PDZ domain-containing protein 11 (PDZD11).